The sequence spans 180 residues: ATP-dependent protease subunit HslV (180 aa).

Thr-7 is a catalytic residue. The Na(+) site is built by Ala-163, Cys-166, and Thr-169.

Belongs to the peptidase T1B family. HslV subfamily. A double ring-shaped homohexamer of HslV is capped on each side by a ring-shaped HslU homohexamer. The assembly of the HslU/HslV complex is dependent on binding of ATP.

It localises to the cytoplasm. The enzyme catalyses ATP-dependent cleavage of peptide bonds with broad specificity.. Allosterically activated by HslU binding. Protease subunit of a proteasome-like degradation complex believed to be a general protein degrading machinery. In Cytophaga hutchinsonii (strain ATCC 33406 / DSM 1761 / CIP 103989 / NBRC 15051 / NCIMB 9469 / D465), this protein is ATP-dependent protease subunit HslV.